A 488-amino-acid chain; its full sequence is Cobyric acid synthase (488 aa).

One can recognise a GATase cobBQ-type domain in the interval lysine 254 to glutamine 442. The active-site Nucleophile is cysteine 336. Histidine 434 is an active-site residue.

The protein belongs to the CobB/CobQ family. CobQ subfamily.

Its pathway is cofactor biosynthesis; adenosylcobalamin biosynthesis. Functionally, catalyzes amidations at positions B, D, E, and G on adenosylcobyrinic A,C-diamide. NH(2) groups are provided by glutamine, and one molecule of ATP is hydrogenolyzed for each amidation. This is Cobyric acid synthase from Beijerinckia indica subsp. indica (strain ATCC 9039 / DSM 1715 / NCIMB 8712).